Here is a 270-residue protein sequence, read N- to C-terminus: NAD kinase (270 aa).

Catalysis depends on D57, which acts as the Proton acceptor. NAD(+) is bound by residues 57–58 (DG), 125–126 (NE), R150, and N227.

Belongs to the NAD kinase family. It depends on a divalent metal cation as a cofactor.

The protein resides in the cytoplasm. It catalyses the reaction NAD(+) + ATP = ADP + NADP(+) + H(+). Involved in the regulation of the intracellular balance of NAD and NADP, and is a key enzyme in the biosynthesis of NADP. Catalyzes specifically the phosphorylation on 2'-hydroxyl of the adenosine moiety of NAD to yield NADP. This chain is NAD kinase, found in Ureaplasma parvum serovar 3 (strain ATCC 700970).